Consider the following 231-residue polypeptide: Octanoyltransferase (231 aa).

One can recognise a BPL/LPL catalytic domain in the interval 49-224 (ADTPDEIWLL…ALQRLLPPVY (176 aa)). Substrate contacts are provided by residues 88-95 (RGGQITYH), 155-157 (ALG), and 168-170 (GLA). Catalysis depends on Cys186, which acts as the Acyl-thioester intermediate.

This sequence belongs to the LipB family.

It is found in the cytoplasm. It carries out the reaction octanoyl-[ACP] + L-lysyl-[protein] = N(6)-octanoyl-L-lysyl-[protein] + holo-[ACP] + H(+). The protein operates within protein modification; protein lipoylation via endogenous pathway; protein N(6)-(lipoyl)lysine from octanoyl-[acyl-carrier-protein]: step 1/2. In terms of biological role, catalyzes the transfer of endogenously produced octanoic acid from octanoyl-acyl-carrier-protein onto the lipoyl domains of lipoate-dependent enzymes. Lipoyl-ACP can also act as a substrate although octanoyl-ACP is likely to be the physiological substrate. The sequence is that of Octanoyltransferase from Aromatoleum aromaticum (strain DSM 19018 / LMG 30748 / EbN1) (Azoarcus sp. (strain EbN1)).